A 43-amino-acid polypeptide reads, in one-letter code: Cytochrome b559 subunit beta (43 aa).

A helical transmembrane segment spans residues 18-34 (WLAVHGLAIPTVFFLGG). His22 is a heme binding site.

Belongs to the PsbE/PsbF family. In terms of assembly, heterodimer of an alpha subunit and a beta subunit. PSII is composed of 1 copy each of membrane proteins PsbA, PsbB, PsbC, PsbD, PsbE, PsbF, PsbH, PsbI, PsbJ, PsbK, PsbL, PsbM, PsbT, PsbX, PsbY, PsbZ, Psb30/Ycf12, at least 3 peripheral proteins of the oxygen-evolving complex and a large number of cofactors. It forms dimeric complexes. Heme b serves as cofactor.

It is found in the plastid. The protein localises to the chloroplast thylakoid membrane. This b-type cytochrome is tightly associated with the reaction center of photosystem II (PSII). PSII is a light-driven water:plastoquinone oxidoreductase that uses light energy to abstract electrons from H(2)O, generating O(2) and a proton gradient subsequently used for ATP formation. It consists of a core antenna complex that captures photons, and an electron transfer chain that converts photonic excitation into a charge separation. This is Cytochrome b559 subunit beta from Thalassiosira pseudonana (Marine diatom).